The sequence spans 133 residues: Alcohol dehydrogenase, 15 kDa subunit (133 aa).

The signal sequence occupies residues 1–24 (MFRRIVPVLGLALGLGLASQAAMA). A disordered region spans residues 23-43 (MAQEQSPPPPPAVQGTPGKDF). Pyrrolidone carboxylic acid is present on glutamine 25.

In terms of assembly, the alcohol dehydrogenase multicomponent enzyme system is composed of a dehydrogenase subunit I (AdhA), a cytochrome c subunit II (AdhB) and a subunit III (AdhS).

Its subcellular location is the cell membrane. Functionally, part of the alcohol dehydrogenase multicomponent enzyme system which is involved in the production of acetic acid and in the ethanol oxidase respiratory chain. Does not play an obligatory role for the alcohol dehydrogenase (ADH) activity. This Gluconobacter oxydans (strain 621H) (Gluconobacter suboxydans) protein is Alcohol dehydrogenase, 15 kDa subunit.